The sequence spans 198 residues: ATP-dependent Clp protease proteolytic subunit (198 aa).

The active-site Nucleophile is the S98. Residue H123 is part of the active site.

Belongs to the peptidase S14 family. Fourteen ClpP subunits assemble into 2 heptameric rings which stack back to back to give a disk-like structure with a central cavity, resembling the structure of eukaryotic proteasomes.

The protein resides in the cytoplasm. The catalysed reaction is Hydrolysis of proteins to small peptides in the presence of ATP and magnesium. alpha-casein is the usual test substrate. In the absence of ATP, only oligopeptides shorter than five residues are hydrolyzed (such as succinyl-Leu-Tyr-|-NHMec, and Leu-Tyr-Leu-|-Tyr-Trp, in which cleavage of the -Tyr-|-Leu- and -Tyr-|-Trp bonds also occurs).. In terms of biological role, cleaves peptides in various proteins in a process that requires ATP hydrolysis. Has a chymotrypsin-like activity. Plays a major role in the degradation of misfolded proteins. This Bacillus velezensis (strain DSM 23117 / BGSC 10A6 / LMG 26770 / FZB42) (Bacillus amyloliquefaciens subsp. plantarum) protein is ATP-dependent Clp protease proteolytic subunit.